Reading from the N-terminus, the 125-residue chain is Small ribosomal subunit protein mS41 (125 aa).

A mitochondrion-targeting transit peptide spans 1–23 (MLFRRLFSSSVIVQAASKTSLRK).

This sequence belongs to the mitochondrion-specific ribosomal protein mS41 family.

Its subcellular location is the mitochondrion. In terms of biological role, involved in telomere length regulation. The chain is Small ribosomal subunit protein mS41 (FYV4) from Kluyveromyces lactis (strain ATCC 8585 / CBS 2359 / DSM 70799 / NBRC 1267 / NRRL Y-1140 / WM37) (Yeast).